A 116-amino-acid chain; its full sequence is Large ribosomal subunit protein bL17 (116 aa).

This sequence belongs to the bacterial ribosomal protein bL17 family. Part of the 50S ribosomal subunit. Contacts protein L32.

This Synechococcus sp. (strain WH7803) protein is Large ribosomal subunit protein bL17.